The following is a 651-amino-acid chain: Zinc metalloproteinase nas-32 (651 aa).

Positions 1-21 are cleaved as a signal peptide; it reads MRRFFICYIGFLSIFLDFILA. A propeptide spanning residues 22 to 202 is cleaved from the precursor; that stretch reads DKDNNSEEER…EQSSKSRRKK (181 aa). Residues Asn25, Asn72, and Asn251 are each glycosylated (N-linked (GlcNAc...) asparagine). One can recognise a Peptidase M12A domain in the interval 203-394; that stretch reads RQIDNLAQFW…KMLNTHYSCS (192 aa). Disulfide bonds link Cys245-Cys393, Cys264-Cys283, Cys395-Cys412, Cys415-Cys426, Cys434-Cys467, and Cys495-Cys516. His291 is a binding site for Zn(2+). Residue Glu292 is part of the active site. 2 residues coordinate Zn(2+): His295 and His301. Residues 380 to 433 enclose the EGF-like domain; that stretch reads TFLDLKMLNTHYSCSCPTILSCGNGGFTNPANCSVCICPYGFGGALCTERTDYG. Residue Asn411 is glycosylated (N-linked (GlcNAc...) asparagine). Residues 434–554 form the CUB domain; sequence CGSTLTATDT…TTYTWSYRYV (121 aa). Asn453 is a glycosylation site (N-linked (GlcNAc...) asparagine). A glycan (N-linked (GlcNAc...) asparagine) is linked at Asn557. Intrachain disulfides connect Cys610–Cys647, Cys619–Cys640, and Cys628–Cys644. The ShKT domain maps to 610–647; the sequence is CKDRFPKSQCSTYSTNGMCTQQPPLAAEFSCAETCGFC.

Requires Zn(2+) as cofactor. In terms of tissue distribution, expressed in pharyngeal, anal depressor, intestinal and vulva muscles, head neurons and head mesodermal cell.

The protein resides in the secreted. Its function is as follows. Metalloprotease. The chain is Zinc metalloproteinase nas-32 (nas-32) from Caenorhabditis elegans.